A 2298-amino-acid chain; its full sequence is Protein Ycf2 (2298 aa).

ATP is bound at residue glycine 1637–serine 1644.

Belongs to the Ycf2 family.

Its subcellular location is the plastid. It localises to the chloroplast stroma. Probable ATPase of unknown function. Its presence in a non-photosynthetic plant (Epifagus virginiana) and experiments in tobacco indicate that it has an essential function which is probably not related to photosynthesis. This chain is Protein Ycf2, found in Lotus japonicus (Lotus corniculatus var. japonicus).